Reading from the N-terminus, the 198-residue chain is Probable GTP-binding protein EngB (198 aa).

An EngB-type G domain is found at 22-195 (DLPEIALAGR…WKAIHKFTKT (174 aa)). Residues 30–37 (GRSNVGKS), 57–61 (GKTQT), 75–78 (DVPG), 142–145 (TKAD), and 174–176 (FSS) contribute to the GTP site. Mg(2+) is bound by residues serine 37 and threonine 59.

The protein belongs to the TRAFAC class TrmE-Era-EngA-EngB-Septin-like GTPase superfamily. EngB GTPase family. The cofactor is Mg(2+).

Necessary for normal cell division and for the maintenance of normal septation. This chain is Probable GTP-binding protein EngB, found in Bacillus cereus (strain B4264).